Reading from the N-terminus, the 205-residue chain is Protein phosphatase inhibitor 2 family member B (205 aa).

The tract at residues 1 to 44 (MAASTASHRPIKGILKNKTSTTSSMVASAEQPRRSVDEELSKKS) is disordered. Alanine 2 carries the post-translational modification N-acetylalanine. Required for binding PPP1CC regions lie at residues 12–17 (KGILKN) and 43–55 (KSQKWDEINILAT). Polar residues predominate over residues 17–26 (NKTSTTSSMV). Over residues 31-44 (QPRRSVDEELSKKS) the composition is skewed to basic and acidic residues. Serine 44 bears the Phosphoserine mark. Phosphothreonine is present on residues threonine 89 and threonine 92. The segment at 111–142 (EPKYRIQEQESSGEEDSDLSPEEREKKRQFEM) is disordered. Residues serine 121, serine 122, serine 127, and serine 130 each carry the phosphoserine modification. Over residues 121 to 130 (SSGEEDSDLS) the composition is skewed to acidic residues. Residues 131–142 (PEEREKKRQFEM) are compositionally biased toward basic and acidic residues. Residues 147 to 150 (HYNE) are required for binding PPP1CC catalytic center, displacing metal ions and inhibition of PPP1CC catalytic activity. The tract at residues 163–205 (KDLHDDDEDEEMLETADGESMNTEESNQGSTPSDQQQNKLRSS) is disordered. The segment covering 167–179 (DDDEDEEMLETAD) has biased composition (acidic residues). Residues 182–205 (SMNTEESNQGSTPSDQQQNKLRSS) are compositionally biased toward polar residues.

It belongs to the protein phosphatase inhibitor 2 family. In terms of assembly, interacts with PPP1CC. Only detected in spermatozoa, both heads and tails.

In terms of biological role, inhibitor of protein-phosphatase 1. The polypeptide is Protein phosphatase inhibitor 2 family member B (Homo sapiens (Human)).